Reading from the N-terminus, the 142-residue chain is Maximins y/Hw (142 aa).

Residues 1–18 (MIFKYIVAVSFLIASGYA) form the signal peptide. Residues 19-43 (RSVKNDEQSLSQREVLEEESLREIR) constitute a propeptide that is removed on maturation. Residue Phe68 is modified to Phenylalanine amide. Positions 72–121 (TAEDHEVMKRLEAVIRDLDSLDHSEEASERETRGFNQEEIANLFTKKEKR) are excised as a propeptide. Ile141 carries the post-translational modification Isoleucine amide.

This sequence belongs to the bombinin family. Expressed by the skin glands.

It is found in the secreted. Maximin-y shows antimicrobial activity against bacteria and against the fungus C.albicans. It has little hemolytic activity. Functionally, maximin-Hw shows antimicrobial activity against bacteria and against the fungus C.albicans. Shows strong hemolytic activity. This chain is Maximins y/Hw, found in Bombina maxima (Giant fire-bellied toad).